Consider the following 201-residue polypeptide: Small ribosomal subunit protein uS4c (201 aa).

An S4 RNA-binding domain is found at 89 to 150; the sequence is MRLDNIVFRL…RQKSQAIITK (62 aa).

Belongs to the universal ribosomal protein uS4 family. Part of the 30S ribosomal subunit. Contacts protein S5. The interaction surface between S4 and S5 is involved in control of translational fidelity.

It is found in the plastid. Its subcellular location is the chloroplast. Functionally, one of the primary rRNA binding proteins, it binds directly to 16S rRNA where it nucleates assembly of the body of the 30S subunit. Its function is as follows. With S5 and S12 plays an important role in translational accuracy. This chain is Small ribosomal subunit protein uS4c (rps4), found in Funaria hygrometrica (Moss).